A 312-amino-acid chain; its full sequence is DNA-directed RNA polymerase subunit alpha (312 aa).

Residues 1–229 (MLQYQIDRID…ELFQPLATVT (229 aa)) are alpha N-terminal domain (alpha-NTD). Residues 241-312 (SPEAQIPLEE…ISIPQSRTSV (72 aa)) form an alpha C-terminal domain (alpha-CTD) region.

The protein belongs to the RNA polymerase alpha chain family. In terms of assembly, in cyanobacteria the RNAP catalytic core is composed of 2 alpha, 1 beta, 1 beta', 1 gamma and 1 omega subunit. When a sigma factor is associated with the core the holoenzyme is formed, which can initiate transcription.

It catalyses the reaction RNA(n) + a ribonucleoside 5'-triphosphate = RNA(n+1) + diphosphate. Its function is as follows. DNA-dependent RNA polymerase catalyzes the transcription of DNA into RNA using the four ribonucleoside triphosphates as substrates. In Prochlorococcus marinus (strain MIT 9215), this protein is DNA-directed RNA polymerase subunit alpha.